A 140-amino-acid polypeptide reads, in one-letter code: Small ribosomal subunit protein uS12 (140 aa).

Residues 33 to 55 (KEQTNVSSPQKRGVCTRVGTMTP) form a disordered region. Asp102 bears the 3-methylthioaspartic acid mark.

It belongs to the universal ribosomal protein uS12 family. In terms of assembly, part of the 30S ribosomal subunit. Contacts proteins S8 and S17. May interact with IF1 in the 30S initiation complex.

Functionally, with S4 and S5 plays an important role in translational accuracy. In terms of biological role, interacts with and stabilizes bases of the 16S rRNA that are involved in tRNA selection in the A site and with the mRNA backbone. Located at the interface of the 30S and 50S subunits, it traverses the body of the 30S subunit contacting proteins on the other side and probably holding the rRNA structure together. The combined cluster of proteins S8, S12 and S17 appears to hold together the shoulder and platform of the 30S subunit. The protein is Small ribosomal subunit protein uS12 of Geobacillus thermodenitrificans (strain NG80-2).